Consider the following 122-residue polypeptide: UPF0102 protein DIP1513 (122 aa).

It belongs to the UPF0102 family.

The protein is UPF0102 protein DIP1513 of Corynebacterium diphtheriae (strain ATCC 700971 / NCTC 13129 / Biotype gravis).